Consider the following 118-residue polypeptide: Protein TusC (118 aa).

It belongs to the DsrF/TusC family. As to quaternary structure, heterohexamer, formed by a dimer of trimers. The hexameric TusBCD complex contains 2 copies each of TusB, TusC and TusD. The TusBCD complex interacts with TusE.

It localises to the cytoplasm. Its function is as follows. Part of a sulfur-relay system required for 2-thiolation of 5-methylaminomethyl-2-thiouridine (mnm(5)s(2)U) at tRNA wobble positions. In Salmonella gallinarum (strain 287/91 / NCTC 13346), this protein is Protein TusC.